The chain runs to 129 residues: Small ribosomal subunit protein uS11 (129 aa).

It belongs to the universal ribosomal protein uS11 family. As to quaternary structure, part of the 30S ribosomal subunit. Interacts with proteins S7 and S18. Binds to IF-3.

In terms of biological role, located on the platform of the 30S subunit, it bridges several disparate RNA helices of the 16S rRNA. Forms part of the Shine-Dalgarno cleft in the 70S ribosome. The chain is Small ribosomal subunit protein uS11 from Staphylococcus haemolyticus (strain JCSC1435).